The sequence spans 492 residues: Falcipain-3 (492 aa).

Topologically, residues 1–35 (MEYHMEYSPNEVIKQEREVFVGKEKSGSKFKRKRS) are cytoplasmic. Residues 1 to 242 (MEYHMEYSPN…LNLKTHGPFK (242 aa)) constitute a propeptide, activation peptide. A Bipartite vacuolar targeting signal 1 motif is present at residues 16 to 25 (EREVFVGKEK). A helical; Signal-anchor for type II membrane protein transmembrane segment spans residues 36-56 (IFIVLTVSICFMFALMLFYFT). Topologically, residues 57–492 (RNENNKTLFT…GTEAYVPLLE (436 aa)) are lumenal. An N-linked (GlcNAc...) asparagine glycan is attached at Asn-61. The Bipartite vacuolar targeting signal 2 motif lies at 84-105 (KSESGKKFIVSKLEELISSYDK). Residue Asn-129 is glycosylated (N-linked (GlcNAc...) asparagine). Residues 251 to 268 (EANYEDVIKKYKPADAKL) carry the Nose motif; required for the correct folding of the mature form motif. 4 disulfides stabilise this stretch: Cys-290–Cys-331, Cys-324–Cys-365, Cys-350–Cys-370, and Cys-419–Cys-480. The active site involves Cys-293. The active site involves His-425. The short motif at 436–445 (DIYNEDTGRM) is the Arm motif; binds to host hemoglobin and required for the inhibitory interaction between the propeptide and the catalytic domain element. The active site involves Asn-455.

The protein belongs to the peptidase C1 family. Auto-cleavage occurs at acidic pH. The proenzyme is the predominant form in late trophozoites and both the pro and mature enzyme are present in schizonts.

The protein localises to the membrane. It localises to the vacuole. Its subcellular location is the cytoplasmic vesicle membrane. With respect to regulation, inhibited by cysteine protease inhibitor ICP. Cysteine protease which cleaves native host hemoglobin and globin in the food vacuole during the asexual blood stage. Preferentially cleaves substrates which have an arginine at the P1 position and a leucine at the P2 position. The sequence is that of Falcipain-3 from Plasmodium falciparum (isolate 3D7).